A 338-amino-acid polypeptide reads, in one-letter code: Ketol-acid reductoisomerase (NADP(+)) (338 aa).

Positions 1–181 (MKVFYDKDCD…GGGKAGIIET (181 aa)) constitute a KARI N-terminal Rossmann domain. NADP(+) is bound by residues 24-27 (YGSQ), R47, and S52. H107 is a catalytic residue. G133 serves as a coordination point for NADP(+). The KARI C-terminal knotted domain maps to 182–327 (NFREETETDL…EKLRAMMPWI (146 aa)). Mg(2+) is bound by residues D190, E194, E226, and E230. S251 contacts substrate.

Belongs to the ketol-acid reductoisomerase family. The cofactor is Mg(2+).

It catalyses the reaction (2R)-2,3-dihydroxy-3-methylbutanoate + NADP(+) = (2S)-2-acetolactate + NADPH + H(+). The catalysed reaction is (2R,3R)-2,3-dihydroxy-3-methylpentanoate + NADP(+) = (S)-2-ethyl-2-hydroxy-3-oxobutanoate + NADPH + H(+). It participates in amino-acid biosynthesis; L-isoleucine biosynthesis; L-isoleucine from 2-oxobutanoate: step 2/4. It functions in the pathway amino-acid biosynthesis; L-valine biosynthesis; L-valine from pyruvate: step 2/4. In terms of biological role, involved in the biosynthesis of branched-chain amino acids (BCAA). Catalyzes an alkyl-migration followed by a ketol-acid reduction of (S)-2-acetolactate (S2AL) to yield (R)-2,3-dihydroxy-isovalerate. In the isomerase reaction, S2AL is rearranged via a Mg-dependent methyl migration to produce 3-hydroxy-3-methyl-2-ketobutyrate (HMKB). In the reductase reaction, this 2-ketoacid undergoes a metal-dependent reduction by NADPH to yield (R)-2,3-dihydroxy-isovalerate. The protein is Ketol-acid reductoisomerase (NADP(+)) of Polaromonas sp. (strain JS666 / ATCC BAA-500).